The sequence spans 66 residues: Cold shock protein CspB (66 aa).

Residues 4-63 enclose the CSD domain; the sequence is GKVKWFNNEKGYGFIEVEGGSDVFVHFTAIQGEGFKSLEEGQEVSFEIVQGNRGPQAANV.

Homodimer.

It is found in the cytoplasm. Functionally, affects cell viability at low temperatures. This is Cold shock protein CspB (cspB) from Geobacillus stearothermophilus (Bacillus stearothermophilus).